We begin with the raw amino-acid sequence, 223 residues long: Ubiquinone biosynthesis protein COQ4 homolog 2, mitochondrial (223 aa).

The transit peptide at 1–26 (MFLRRVHPVRLGHAIQRSLTTTKSRN) directs the protein to the mitochondrion. The span at 21-32 (TTKSRNESTTTT) shows a compositional bias: low complexity. A disordered region spans residues 21–43 (TTKSRNESTTTTVEAPQAVPSPP). The Zn(2+) site is built by His177, Asp178, His181, and Glu193.

This sequence belongs to the COQ4 family. As to quaternary structure, component of a multi-subunit COQ enzyme complex. Zn(2+) serves as cofactor.

It localises to the mitochondrion inner membrane. The enzyme catalyses a 4-hydroxy-3-methoxy-5-(all-trans-polyprenyl)benzoate + H(+) = a 2-methoxy-6-(all-trans-polyprenyl)phenol + CO2. It functions in the pathway cofactor biosynthesis; ubiquinone biosynthesis. Its function is as follows. Lyase that catalyzes the C1-decarboxylation of 4-hydroxy-3-methoxy-5-(all-trans-polyprenyl)benzoic acid into 2-methoxy-6-(all-trans-polyprenyl)phenol during ubiquinone biosynthesis. The sequence is that of Ubiquinone biosynthesis protein COQ4 homolog 2, mitochondrial from Culex quinquefasciatus (Southern house mosquito).